The sequence spans 398 residues: RNA exonuclease 3 (398 aa).

In terms of domain architecture, Exonuclease spans 239–385 (VLALDCEMGF…QDAIAAMDII (147 aa)).

Belongs to the REXO1/REXO3 family.

It localises to the cytoplasm. The protein resides in the nucleus. Functionally, 3' to 5' exoribonuclease required for proper 3' end maturation of MRP RNA and of the U5L snRNA. In Candida glabrata (strain ATCC 2001 / BCRC 20586 / JCM 3761 / NBRC 0622 / NRRL Y-65 / CBS 138) (Yeast), this protein is RNA exonuclease 3 (REX3).